The sequence spans 162 residues: MAILDINEIRAILPHRYPFLLVDRILEMETDRIVGIKNVTFNEPQFTGHFPDFPVMPGVMIVEAMAQTAGVLVLHSMPDRANKLVLLVAIENARFRKPVVPGDTLRMEMKIIKRKASVAKMAGIATVDGVVVAEAEVMCKLADKEEKPPAAPEIKVPAEAAV.

H49 is an active-site residue.

The protein belongs to the thioester dehydratase family. FabZ subfamily.

It localises to the cytoplasm. It catalyses the reaction a (3R)-hydroxyacyl-[ACP] = a (2E)-enoyl-[ACP] + H2O. Its function is as follows. Involved in unsaturated fatty acids biosynthesis. Catalyzes the dehydration of short chain beta-hydroxyacyl-ACPs and long chain saturated and unsaturated beta-hydroxyacyl-ACPs. The polypeptide is 3-hydroxyacyl-[acyl-carrier-protein] dehydratase FabZ (Solibacter usitatus (strain Ellin6076)).